The sequence spans 147 residues: Basic phospholipase A2 beta-bungarotoxin A1 chain (147 aa).

The signal sequence occupies residues 1 to 19 (MYPAHLLILSAVCVSLLGA). A propeptide spanning residues 20-27 (ANIPPHPL) is cleaved from the precursor. 6 disulfide bridges follow: Cys54–Cys146, Cys56–Cys72, Cys71–Cys127, Cys78–Cys120, Cys88–Cys113, and Cys106–Cys118. 3 residues coordinate Ca(2+): Tyr55, Gly57, and Gly59. His75 is an active-site residue. Ca(2+) is bound at residue Asp76. Asp121 is an active-site residue.

Belongs to the phospholipase A2 family. Group I subfamily. D49 sub-subfamily. As to quaternary structure, heterodimer; disulfide-linked. The A chains have phospholipase A2 activity and the B chains show homology with the basic protease inhibitors. Ca(2+) is required as a cofactor. In terms of tissue distribution, expressed by the venom gland.

The protein resides in the secreted. It carries out the reaction a 1,2-diacyl-sn-glycero-3-phosphocholine + H2O = a 1-acyl-sn-glycero-3-phosphocholine + a fatty acid + H(+). In terms of biological role, snake venom phospholipase A2 (PLA2) that inhibits neuromuscular transmission by blocking acetylcholine release from the nerve termini. PLA2 catalyzes the calcium-dependent hydrolysis of the 2-acyl groups in 3-sn-phosphoglycerides. The sequence is that of Basic phospholipase A2 beta-bungarotoxin A1 chain from Bungarus caeruleus (Indian krait).